The primary structure comprises 175 residues: Crossover junction endodeoxyribonuclease RuvC (175 aa).

Residues D8, E67, and D139 contribute to the active site. D8, E67, and D139 together coordinate Mg(2+).

It belongs to the RuvC family. Homodimer which binds Holliday junction (HJ) DNA. The HJ becomes 2-fold symmetrical on binding to RuvC with unstacked arms; it has a different conformation from HJ DNA in complex with RuvA. In the full resolvosome a probable DNA-RuvA(4)-RuvB(12)-RuvC(2) complex forms which resolves the HJ. Mg(2+) is required as a cofactor.

The protein localises to the cytoplasm. It carries out the reaction Endonucleolytic cleavage at a junction such as a reciprocal single-stranded crossover between two homologous DNA duplexes (Holliday junction).. Functionally, the RuvA-RuvB-RuvC complex processes Holliday junction (HJ) DNA during genetic recombination and DNA repair. Endonuclease that resolves HJ intermediates. Cleaves cruciform DNA by making single-stranded nicks across the HJ at symmetrical positions within the homologous arms, yielding a 5'-phosphate and a 3'-hydroxyl group; requires a central core of homology in the junction. The consensus cleavage sequence is 5'-(A/T)TT(C/G)-3'. Cleavage occurs on the 3'-side of the TT dinucleotide at the point of strand exchange. HJ branch migration catalyzed by RuvA-RuvB allows RuvC to scan DNA until it finds its consensus sequence, where it cleaves and resolves the cruciform DNA. The polypeptide is Crossover junction endodeoxyribonuclease RuvC (Marinobacter nauticus (strain ATCC 700491 / DSM 11845 / VT8) (Marinobacter aquaeolei)).